Consider the following 430-residue polypeptide: Aspartate aminotransferase, mitochondrial (430 aa).

The transit peptide at 1–29 (MALLHSGRALPGIAAAFHPGLAAAASARA) directs the protein to the mitochondrion. At Thr48 the chain carries Phosphothreonine. Residue Lys59 is modified to N6-acetyllysine. Residue Gly65 coordinates substrate. Lys73 is subject to N6-acetyllysine; alternate. Residue Lys73 is modified to N6-succinyllysine; alternate. Position 82 is an N6-acetyllysine (Lys82). Residue Lys90 is modified to N6-acetyllysine; alternate. At Lys90 the chain carries N6-succinyllysine; alternate. The residue at position 96 (Tyr96) is a 3'-nitrotyrosine; alternate. Phosphotyrosine; alternate is present on Tyr96. Residues Lys107 and Lys122 each carry the N6-acetyllysine; alternate modification. 2 positions are modified to N6-succinyllysine; alternate: Lys107 and Lys122. At Ser143 the chain carries Phosphoserine. Lys159 carries the post-translational modification N6-acetyllysine; alternate. Residue Lys159 is modified to N6-succinyllysine; alternate. Trp162 lines the substrate pocket. At Lys185 the chain carries N6-acetyllysine; alternate. An N6-succinyllysine; alternate modification is found at Lys185. Asn215 serves as a coordination point for substrate. Lys227 is modified (N6-succinyllysine). An N6-acetyllysine modification is found at Lys234. An N6-acetyllysine; alternate mark is found at Lys279 and Lys296. An N6-(pyridoxal phosphate)lysine; alternate modification is found at Lys279. Lys296 is subject to N6-succinyllysine; alternate. Lys302 is subject to N6-acetyllysine. Lys309 bears the N6-acetyllysine; alternate mark. At Lys309 the chain carries N6-succinyllysine; alternate. The residue at position 313 (Arg313) is an Asymmetric dimethylarginine. Thr333 carries the post-translational modification Phosphothreonine. Lys338 is modified (N6-acetyllysine; alternate). Residue Lys338 is modified to N6-succinyllysine; alternate. Residue Lys345 is modified to N6-acetyllysine. Lys363 carries the post-translational modification N6-acetyllysine; alternate. The residue at position 363 (Lys363) is an N6-succinyllysine; alternate. Lys364 and Lys387 each carry N6-acetyllysine. 2 positions are modified to N6-acetyllysine; alternate: Lys396 and Lys404. Lys396 and Lys404 each carry N6-succinyllysine; alternate. Arg407 contributes to the substrate binding site.

It belongs to the class-I pyridoxal-phosphate-dependent aminotransferase family. In terms of assembly, homodimer. Pyridoxal 5'-phosphate serves as cofactor.

The protein resides in the mitochondrion matrix. The protein localises to the cell membrane. The catalysed reaction is L-aspartate + 2-oxoglutarate = oxaloacetate + L-glutamate. It catalyses the reaction L-kynurenine + 2-oxoglutarate = kynurenate + L-glutamate + H2O. In terms of biological role, catalyzes the irreversible transamination of the L-tryptophan metabolite L-kynurenine to form kynurenic acid (KA). As a member of the malate-aspartate shuttle, it has a key role in the intracellular NAD(H) redox balance. Is important for metabolite exchange between mitochondria and cytosol, and for amino acid metabolism. Facilitates cellular uptake of long-chain free fatty acids. This chain is Aspartate aminotransferase, mitochondrial (GOT2), found in Pongo abelii (Sumatran orangutan).